Consider the following 117-residue polypeptide: Large ribosomal subunit protein bL20 (117 aa).

It belongs to the bacterial ribosomal protein bL20 family.

Its function is as follows. Binds directly to 23S ribosomal RNA and is necessary for the in vitro assembly process of the 50S ribosomal subunit. It is not involved in the protein synthesizing functions of that subunit. The chain is Large ribosomal subunit protein bL20 from Ruminiclostridium cellulolyticum (strain ATCC 35319 / DSM 5812 / JCM 6584 / H10) (Clostridium cellulolyticum).